The chain runs to 90 residues: MAKATSSLVVPIIFLVIFALVEQNMGCNDYIVGDVCVHCRERCLRYYPVTRKAECYRNHCLCIGPCPDDRPHKRFQMLNSSKNVKAQILS.

The first 23 residues, 1-23 (MAKATSSLVVPIIFLVIFALVEQ), serve as a signal peptide directing secretion. Disulfide bonds link cysteine 27/cysteine 66, cysteine 36/cysteine 55, cysteine 39/cysteine 60, and cysteine 43/cysteine 62.

The protein belongs to the DEFL family.

It localises to the secreted. In Arabidopsis thaliana (Mouse-ear cress), this protein is Defensin-like protein 178 (LCR64).